We begin with the raw amino-acid sequence, 274 residues long: Lectin-like protein (274 aa).

The first 19 residues, 1 to 19, serve as a signal peptide directing secretion; the sequence is MKIHKLCFLALLLAHTTSA. The interval 28 to 268 is legume-lectin like; it reads TSELVFLGDA…RHDIWSWTFQ (241 aa). The interval 62 to 81 is disordered; sequence SHGQSLWSTPVPFKPSSNSS. N-linked (GlcNAc...) asparagine glycosylation occurs at N129. The residue at position 238 (S238) is a Phosphoserine.

This sequence belongs to the leguminous lectin family. Expressed in seedlings and leaves of adult plants.

It is found in the secreted. Its subcellular location is the extracellular space. The protein localises to the apoplast. The protein resides in the cell membrane. Functionally, plays a positive role in the effector-triggered immunity (ETI) response. Involved in salicylic acid (SA)-mediated processes occurring in ETI response, but is not involved in the autophagy process. Promotes systemic rather than local immunity. Essential for systemic acquired resistance (SAR), but not necessary for immune signaling downstream of SA. May act in parallel with SA. This Arabidopsis thaliana (Mouse-ear cress) protein is Lectin-like protein.